Consider the following 358-residue polypeptide: Core-capsid bridging protein (358 aa).

The disordered stretch occupies residues 296-331 (PSITPTPGYRGTTFKPSRTRSTRRRRSVRRRSRRTA). Positions 312–329 (SRTRSTRRRRSVRRRSRR) are enriched in basic residues.

Belongs to the adenoviridae core-capsid bridging protein family. In terms of assembly, monomer. Homodimer. Exists in equilibrium between monomers and dimers in solution. Interacts with the histone-like nucleoprotein; this interactions bridge the virus core to the capsid. Interacts with core protein X; this interactions bridge the virus core to the capsid. Interacts with the endosome lysis protein VI; this interactions bridge the virus core to the capsid. Interacts with the peripentonal hexons. Interacts with host NPM1; this interaction might play a role in virus assembly.

The protein localises to the virion. It localises to the host nucleus. It is found in the host nucleolus. In terms of biological role, associates loosely with the viral DNA to form an outer shell around the nucleoprotein-DNA complex and links it with the capsid by binding the endosome lysis protein. Dissociates from the viral genome during entry. Might be involved in nuclear capsid assembly of the viral particles through its association with NPM1/nucleophosmin. The chain is Core-capsid bridging protein from Human adenovirus F serotype 40 (HAdV-40).